The primary structure comprises 512 residues: Dihydroniloticin synthase CYP71CD2 (512 aa).

Residues 1 to 21 (MNLQLDYFSITSFLVFLVVLF) traverse the membrane as a helical segment. Cysteine 449 serves as a coordination point for heme.

This sequence belongs to the cytochrome P450 family. Heme serves as cofactor.

It is found in the membrane. It carries out the reaction tirucalla-7,24-dien-3beta-ol + 2 reduced [NADPH--hemoprotein reductase] + 2 O2 = dihydroniloticin + 2 oxidized [NADPH--hemoprotein reductase] + 2 H2O + 2 H(+). The protein operates within secondary metabolite biosynthesis; terpenoid biosynthesis. Functionally, monooxygenase involved in the biosynthesis of limonoids triterpene natural products such as azadirachtin, an antifeedant widely used as bioinsecticide, and possessing many medicinal applications including anti-tumoral, anti-malarial, anti-rheumatic, antibacterial, anti-inflammatory, anti-pyretic and diuretic effects. Catalyzes the conversion of tirucalladienol to dihydroniloticin. This chain is Dihydroniloticin synthase CYP71CD2, found in Azadirachta indica (Neem tree).